A 199-amino-acid chain; its full sequence is Interleukin-11 (199 aa).

Positions 1-21 are cleaved as a signal peptide; sequence MNCVCRLVLVVLSLWPDRVVA. Residues 182-190 form an important for interaction with IL11RA and for the stimulation of cell proliferation region; the sequence is HLTLDWAVR.

Belongs to the IL-6 superfamily. Interacts with IL11RA to associate with IL6ST, giving rise to a multimeric signaling complex.

The protein localises to the secreted. Its function is as follows. Cytokine that stimulates the proliferation of hematopoietic stem cells and megakaryocyte progenitor cells and induces megakaryocyte maturation resulting in increased platelet production. Also promotes the proliferation of hepatocytes in response to liver damage. Binding to its receptor formed by IL6ST and IL11RA activates a signaling cascade that promotes cell proliferation. Signaling leads to the activation of intracellular protein kinases and the phosphorylation of STAT3. The interaction with the membrane-bound IL11RA and IL6ST stimulates 'classic signaling', whereas the binding of IL11 and soluble IL11RA to IL6ST stimulates 'trans-signaling'. The protein is Interleukin-11 of Rattus norvegicus (Rat).